The following is a 312-amino-acid chain: Malate dehydrogenase (312 aa).

NAD(+)-binding positions include 12–17 (GAGFTG) and Asp36. The substrate site is built by Arg87 and Arg93. Residues Asn100 and 123–125 (LTN) each bind NAD(+). A substrate-binding site is contributed by Asn125. A Phosphoserine modification is found at Ser149. Arg156 is a binding site for substrate. Residue His180 is the Proton acceptor of the active site.

Belongs to the LDH/MDH superfamily. MDH type 3 family.

It carries out the reaction (S)-malate + NAD(+) = oxaloacetate + NADH + H(+). Its function is as follows. Catalyzes the reversible oxidation of malate to oxaloacetate. This Geobacillus kaustophilus (strain HTA426) protein is Malate dehydrogenase.